A 712-amino-acid chain; its full sequence is Sesterterpene synthase btcA (712 aa).

The terpene cyclase stretch occupies residues 1-332 (MTTIWEHCVD…CANCPRHHAW (332 aa)). Residue Asp96 participates in Mg(2+) binding. Substrate contacts are provided by residues Asp96, Asn234, 238–242 (SWDRE), and 328–329 (RH). Positions 96-100 (DDLCD) match the DDXXD 1 motif. An NSE/DTE motif is present at residues 234-242 (NDYWSWDRE). The segment at 333–706 (RDEESSPSER…VMRIVLSRLS (374 aa)) is prenyltransferase. The segment at 334-373 (DEESSPSERSFSPSNEGIEDPRLSPGASTTSSMSQKSSPA) is disordered. Composition is skewed to low complexity over residues 340-349 (SERSFSPSNE) and 361-373 (STTS…SSPA). Isopentenyl diphosphate contacts are provided by Lys414, Arg417, and His446. The Mg(2+) site is built by Asp453 and Asp457. Residues 453–457 (DDIED) carry the DDXXD 2 motif. Dimethylallyl diphosphate is bound at residue Arg462. Arg463 is an isopentenyl diphosphate binding site. Dimethylallyl diphosphate-binding residues include Lys540, Thr541, Gln580, Asn587, Lys597, and Lys607.

It in the N-terminal section; belongs to the terpene synthase family. This sequence in the C-terminal section; belongs to the FPP/GGPP synthase family. As to quaternary structure, hexamer. Mg(2+) is required as a cofactor.

It catalyses the reaction isopentenyl diphosphate + (2E,6E)-farnesyl diphosphate = (2E,6E,10E)-geranylgeranyl diphosphate + diphosphate. The catalysed reaction is isopentenyl diphosphate + (2E,6E,10E)-geranylgeranyl diphosphate = (2E,6E,10E,14E)-geranylfarnesyl diphosphate + diphosphate. Its pathway is secondary metabolite biosynthesis; terpenoid biosynthesis. In terms of biological role, bifunctional terpene synthase; part of the gene cluster that mediates the biosynthesis of betaestacins. The bifunctional terpene synthase btcA converts isopentenyl diphosphate (IPP) and dimethylallyl diphosphate (DMAPP) into the sesterterpene betaestacin I. The C-terminal prenyltransferase (PT) domain of btcA catalyzes formation of GFPP, whereas the N-terminal terpene cyclase (TC) domain catalyzes the cyclization of GFPP into betaestacin I. The cytochrome P450 monooxygenase btcB oxidizes the C25 methyl group of betaestacin I to yield the carboxylic acid betaestacin IV via the alcohol betaestacin III. The cytochrome P450 monooxygenase btcC further catalyzes the multistep oxidation of betaestacin IV to produce several compounds, including betaestacins Va, Vb, Vc and VI. The sequence is that of Sesterterpene synthase btcA from Colletotrichum orbiculare (strain 104-T / ATCC 96160 / CBS 514.97 / LARS 414 / MAFF 240422) (Cucumber anthracnose fungus).